The following is a 318-amino-acid chain: NADH-ubiquinone oxidoreductase chain 1 (318 aa).

8 helical membrane-spanning segments follow: residues 2–22 (FFIN…FLTL), 70–90 (LFII…VPLP), 100–120 (LGIL…LWSG), 136–156 (VAQT…VLLM), 171–191 (HMWL…STLA), 231–251 (IILM…YINL), 253–273 (ELYS…FLWI), and 293–313 (FLPL…FTAG).

Belongs to the complex I subunit 1 family. Core subunit of respiratory chain NADH dehydrogenase (Complex I) which is composed of 45 different subunits.

It localises to the mitochondrion inner membrane. It carries out the reaction a ubiquinone + NADH + 5 H(+)(in) = a ubiquinol + NAD(+) + 4 H(+)(out). Functionally, core subunit of the mitochondrial membrane respiratory chain NADH dehydrogenase (Complex I) which catalyzes electron transfer from NADH through the respiratory chain, using ubiquinone as an electron acceptor. Essential for the catalytic activity and assembly of complex I. The sequence is that of NADH-ubiquinone oxidoreductase chain 1 (Mtnd1) from Mus musculus (Mouse).